Here is a 576-residue protein sequence, read N- to C-terminus: Formate--tetrahydrofolate ligase 1 (576 aa).

Residue 69 to 76 (TPLGEGKT) participates in ATP binding.

It belongs to the formate--tetrahydrofolate ligase family.

It carries out the reaction (6S)-5,6,7,8-tetrahydrofolate + formate + ATP = (6R)-10-formyltetrahydrofolate + ADP + phosphate. It participates in one-carbon metabolism; tetrahydrofolate interconversion. The sequence is that of Formate--tetrahydrofolate ligase 1 from Rubrobacter xylanophilus (strain DSM 9941 / JCM 11954 / NBRC 16129 / PRD-1).